The chain runs to 37 residues: Large ribosomal subunit protein bL36 (37 aa).

The protein belongs to the bacterial ribosomal protein bL36 family.

The polypeptide is Large ribosomal subunit protein bL36 (Borreliella burgdorferi (strain ATCC 35210 / DSM 4680 / CIP 102532 / B31) (Borrelia burgdorferi)).